Consider the following 435-residue polypeptide: 5'-deoxyadenosine deaminase (435 aa).

Zn(2+)-binding residues include His-64 and His-66. Residues Glu-93 and His-185 each contribute to the substrate site. His-212 is a binding site for Zn(2+). Residues Glu-215 and Asp-300 each contribute to the substrate site. Position 300 (Asp-300) interacts with Zn(2+).

Belongs to the metallo-dependent hydrolases superfamily. MTA/SAH deaminase family. As to quaternary structure, homotetramer. Zn(2+) serves as cofactor.

The enzyme catalyses 5'-deoxyadenosine + H2O + H(+) = 5'-deoxyinosine + NH4(+). The catalysed reaction is S-adenosyl-L-homocysteine + H2O + H(+) = S-inosyl-L-homocysteine + NH4(+). It carries out the reaction S-methyl-5'-thioadenosine + H2O + H(+) = S-methyl-5'-thioinosine + NH4(+). It catalyses the reaction adenosine + H2O + H(+) = inosine + NH4(+). It functions in the pathway amino-acid biosynthesis; S-adenosyl-L-methionine biosynthesis. Its function is as follows. Catalyzes the deamination of three SAM-derived enzymatic products, namely 5'-deoxyadenosine, S-adenosyl-L-homocysteine, and 5'-methylthioadenosine, to produce the inosine analogs. Can also deaminate adenosine. The preferred substrate for this enzyme is 5'-deoxyadenosine, but all these substrates are efficiently deaminated. Likely functions in a S-adenosyl-L-methionine (SAM) recycling pathway from S-adenosyl-L-homocysteine (SAH) produced from SAM-dependent methylation reactions. May also be involved in the recycling of 5'-deoxyadenosine, whereupon the 5'-deoxyribose moiety of 5'-deoxyinosine is further metabolized to deoxyhexoses used for the biosynthesis of aromatic amino acids in methanogens. In Methanobrevibacter smithii (strain ATCC 35061 / DSM 861 / OCM 144 / PS), this protein is 5'-deoxyadenosine deaminase.